The primary structure comprises 133 residues: ATP synthase epsilon chain, chloroplastic (133 aa).

The protein belongs to the ATPase epsilon chain family. In terms of assembly, F-type ATPases have 2 components, CF(1) - the catalytic core - and CF(0) - the membrane proton channel. CF(1) has five subunits: alpha(3), beta(3), gamma(1), delta(1), epsilon(1). CF(0) has three main subunits: a, b and c.

The protein resides in the plastid. Its subcellular location is the chloroplast thylakoid membrane. Its function is as follows. Produces ATP from ADP in the presence of a proton gradient across the membrane. The sequence is that of ATP synthase epsilon chain, chloroplastic from Vitis vinifera (Grape).